The following is a 430-amino-acid chain: Tyrosine--tRNA ligase (430 aa).

Tyr32 contacts L-tyrosine. The 'HIGH' region motif lies at 37 to 46; sequence PTADSLHIGH. Positions 172 and 176 each coordinate L-tyrosine. The 'KMSKS' region signature appears at 232–236; that stretch reads KFGKT. Lys235 contacts ATP. Residues 362-429 enclose the S4 RNA-binding domain; the sequence is IKAVDLCTEK…GKKNYYLLIA (68 aa).

The protein belongs to the class-I aminoacyl-tRNA synthetase family. TyrS type 1 subfamily. In terms of assembly, homodimer.

It localises to the cytoplasm. The enzyme catalyses tRNA(Tyr) + L-tyrosine + ATP = L-tyrosyl-tRNA(Tyr) + AMP + diphosphate + H(+). Catalyzes the attachment of tyrosine to tRNA(Tyr) in a two-step reaction: tyrosine is first activated by ATP to form Tyr-AMP and then transferred to the acceptor end of tRNA(Tyr). In Parabacteroides distasonis (strain ATCC 8503 / DSM 20701 / CIP 104284 / JCM 5825 / NCTC 11152), this protein is Tyrosine--tRNA ligase.